The following is a 201-amino-acid chain: Protease (201 aa).

Catalysis depends on residues H55, D72, and C122.

Belongs to the peptidase C5 family. As to quaternary structure, interacts with protease cofactor pVI-C; this interaction is necessary for protease activation.

The protein resides in the virion. It is found in the host nucleus. It carries out the reaction Cleaves proteins of the adenovirus and its host cell at two consensus sites: -Yaa-Xaa-Gly-Gly-|-Xaa- and -Yaa-Xaa-Gly-Xaa-|-Gly- (in which Yaa is Met, Ile or Leu, and Xaa is any amino acid).. Its activity is regulated as follows. Requires DNA and protease cofactor for maximal activation. Inside nascent virions, becomes partially activated by binding to the viral DNA, allowing it to cleave the cofactor that binds to the protease and fully activates it. Actin, like the viral protease cofactor, seems to act as a cofactor in the cleavage of cytokeratin 18 and of actin itself. Functionally, cleaves viral precursor proteins (pTP, pIIIa, pVI, pVII, pVIII, and pX) inside newly assembled particles giving rise to mature virions. Protease complexed to its cofactor slides along the viral DNA to specifically locate and cleave the viral precursors. Mature virions have a weakened organization compared to the unmature virions, thereby facilitating subsequent uncoating. Without maturation, the particle lacks infectivity and is unable to uncoat. Late in adenovirus infection, in the cytoplasm, may participate in the cytoskeleton destruction. Cleaves host cell cytoskeletal keratins K7 and K18. This is Protease from Ovis aries (Sheep).